We begin with the raw amino-acid sequence, 266 residues long: Signal peptidase I (266 aa).

Residues 1–20 (MQTDNTKSNTNKTAKQEWGS) lie on the Cytoplasmic side of the membrane. The chain crosses the membrane as a helical span at residues 21-41 (FAFVICIALLIRILIMEPFTV). At 42–266 (PTGSMKATIL…IFRNLYSTDE (225 aa)) the chain is on the periplasmic side. Active-site residues include serine 45 and lysine 108.

It belongs to the peptidase S26 family.

Its subcellular location is the cell inner membrane. The catalysed reaction is Cleavage of hydrophobic, N-terminal signal or leader sequences from secreted and periplasmic proteins.. This is Signal peptidase I (lepB) from Rickettsia felis (strain ATCC VR-1525 / URRWXCal2) (Rickettsia azadi).